Consider the following 595-residue polypeptide: uncharacterized protein (595 aa).

The next 9 helical transmembrane spans lie at 64–84, 86–106, 239–259, 281–301, 334–354, 368–388, 504–524, 547–567, and 571–591; these read VVFL…LIVF, IFYA…IGVL, FYVI…PVAS, FYLW…GILP, VHFI…LFFI, MFGI…HFII, FIYV…SYIM, YLFQ…GILT, and IIAG…LFKF.

This sequence to M.jannaschii FlaJ.

The protein localises to the cell membrane. This is an uncharacterized protein from Methanocaldococcus jannaschii (strain ATCC 43067 / DSM 2661 / JAL-1 / JCM 10045 / NBRC 100440) (Methanococcus jannaschii).